A 1058-amino-acid chain; its full sequence is Lon protease homolog, mitochondrial (1058 aa).

The transit peptide at 1–47 directs the protein to the mitochondrion; the sequence is MLTRIRNAGVGGNAARRVRLLAGYTGARMAHAAALNSTTGAGGAARA. Positions 72 to 151 are disordered; sequence GGQCILKQDR…RSNPPSEGEV (80 aa). Basic and acidic residues-rich tracts occupy residues 78–97 and 106–118; these read KQDR…RAEE and DEEA…EEQA. Positions 129–142 are enriched in gly residues; sequence GSGGSASSAGGGGR. Positions 158–412 constitute a Lon N-terminal domain; it reads LMVLPMSNRP…KALVFIKKEV (255 aa). 564 to 571 lines the ATP pocket; that stretch reads GPPGVGKT. The interval 778-814 is disordered; it reads TPKSAPAETNIEPENGKPDASAKPLTNNLPAPEPLNI. Residues 844-1030 form the Lon proteolytic domain; that stretch reads KTPAGVVMGL…DDVFNVLFGS (187 aa). Catalysis depends on residues Ser-936 and Lys-979.

This sequence belongs to the peptidase S16 family. As to quaternary structure, homohexamer or homoheptamer. Organized in a ring with a central cavity.

The protein localises to the mitochondrion matrix. The enzyme catalyses Hydrolysis of proteins in presence of ATP.. Its function is as follows. ATP-dependent serine protease that mediates the selective degradation of misfolded, unassembled or oxidatively damaged polypeptides as well as certain short-lived regulatory proteins in the mitochondrial matrix. May also have a chaperone function in the assembly of inner membrane protein complexes. Participates in the regulation of mitochondrial gene expression and in the maintenance of the integrity of the mitochondrial genome. Binds to mitochondrial DNA in a site-specific manner. The protein is Lon protease homolog, mitochondrial of Eremothecium gossypii (strain ATCC 10895 / CBS 109.51 / FGSC 9923 / NRRL Y-1056) (Yeast).